Reading from the N-terminus, the 476-residue chain is Glycogen synthase (476 aa).

An ADP-alpha-D-glucose-binding site is contributed by lysine 15.

Belongs to the glycosyltransferase 1 family. Bacterial/plant glycogen synthase subfamily.

The catalysed reaction is [(1-&gt;4)-alpha-D-glucosyl](n) + ADP-alpha-D-glucose = [(1-&gt;4)-alpha-D-glucosyl](n+1) + ADP + H(+). Its pathway is glycan biosynthesis; glycogen biosynthesis. Its function is as follows. Synthesizes alpha-1,4-glucan chains using ADP-glucose. The chain is Glycogen synthase from Yersinia pseudotuberculosis serotype O:1b (strain IP 31758).